The following is a 454-amino-acid chain: Cell division cycle-associated 7-like protein (454 aa).

The Integrase domain-binding motif 1 (IBM1) signature appears at 9 to 33; it reads IPKEVADIFNAPSDDEEFVGFRDDV. Serine 21 carries the post-translational modification Phosphoserine. The Integrase domain-binding motif 2 (IBM2) signature appears at 65 to 91; it reads FTEELRRIFIEDTDSETEDFAGFTQSD. The residue at position 77 (threonine 77) is a Phosphothreonine. The residue at position 79 (serine 79) is a Phosphoserine. 2 positions are modified to phosphothreonine: threonine 81 and threonine 88. 2 disordered regions span residues 103 to 169 and 188 to 213; these read VESD…LFSS and QVIQ…SSDA. Phosphoserine is present on residues serine 105, serine 108, serine 117, serine 138, serine 139, serine 162, serine 195, and serine 197. A compositionally biased stretch (acidic residues) spans 117 to 126; the sequence is SEEEEDEEED. The segment at 213–235 is MYC-binding; sequence ALLKRTMNIKENKAMLAQLLAEL. Residues lysine 222 and lysine 225 each participate in a glycyl lysine isopeptide (Lys-Gly) (interchain with G-Cter in SUMO2) cross-link. Position 261 is a phosphoserine (serine 261).

As to quaternary structure, interacts with MYC. Interacts (via IBM motifs) with PSIP1 (via IBD domain); phosphorylation increases its affinity for PSIP1. Phosphorylation increases its interaction with PSIP1. In terms of tissue distribution, ubiquitous. Overexpressed in medulloblastoma.

It is found in the cytoplasm. Its subcellular location is the nucleus. Plays a role in transcriptional regulation as a repressor that inhibits monoamine oxidase A (MAOA) activity and gene expression by binding to the promoter. Plays an important oncogenic role in mediating the full transforming effect of MYC in medulloblastoma cells. Involved in apoptotic signaling pathways; May act downstream of P38-kinase and BCL-2, but upstream of CASP3/caspase-3 as well as CCND1/cyclin D1 and E2F1. The protein is Cell division cycle-associated 7-like protein (CDCA7L) of Homo sapiens (Human).